We begin with the raw amino-acid sequence, 696 residues long: UvrABC system protein C (696 aa).

The GIY-YIG domain maps to 16–95 (TEPGVYKFRD…IKRFDPRFNV (80 aa)). In terms of domain architecture, UVR spans 208 to 243 (DKVTRKLNADMMAAAEELDFERAARLRDDLEAIDKV).

The protein belongs to the UvrC family. In terms of assembly, interacts with UvrB in an incision complex.

The protein resides in the cytoplasm. Functionally, the UvrABC repair system catalyzes the recognition and processing of DNA lesions. UvrC both incises the 5' and 3' sides of the lesion. The N-terminal half is responsible for the 3' incision and the C-terminal half is responsible for the 5' incision. This is UvrABC system protein C from Corynebacterium glutamicum (strain R).